The primary structure comprises 938 residues: Isoleucine--tRNA ligase (938 aa).

Positions 58–68 (PYANGNIHIGH) match the 'HIGH' region motif. L-isoleucyl-5'-AMP is bound at residue Glu561. The 'KMSKS' region signature appears at 602–606 (KMSKS). ATP is bound at residue Lys605. 4 residues coordinate Zn(2+): Cys901, Cys904, Cys921, and Cys924.

It belongs to the class-I aminoacyl-tRNA synthetase family. IleS type 1 subfamily. As to quaternary structure, monomer. Requires Zn(2+) as cofactor.

It localises to the cytoplasm. It carries out the reaction tRNA(Ile) + L-isoleucine + ATP = L-isoleucyl-tRNA(Ile) + AMP + diphosphate. Its function is as follows. Catalyzes the attachment of isoleucine to tRNA(Ile). As IleRS can inadvertently accommodate and process structurally similar amino acids such as valine, to avoid such errors it has two additional distinct tRNA(Ile)-dependent editing activities. One activity is designated as 'pretransfer' editing and involves the hydrolysis of activated Val-AMP. The other activity is designated 'posttransfer' editing and involves deacylation of mischarged Val-tRNA(Ile). The polypeptide is Isoleucine--tRNA ligase (Yersinia pseudotuberculosis serotype O:1b (strain IP 31758)).